The chain runs to 262 residues: Phosphatidylglycerol--prolipoprotein diacylglyceryl transferase (262 aa).

The next 4 membrane-spanning stretches (helical) occupy residues 17 to 37 (FAIHWYGLMYLMAFVQFLLLG), 59 to 79 (LLFAGVLGVVLGGRLGYTLFY), 94 to 114 (IWEGGMSFHGGLLGVLAALYW), and 121 to 141 (TTFFVVSDLVAPLVPFGLAFG). Arginine 142 provides a ligand contact to a 1,2-diacyl-sn-glycero-3-phospho-(1'-sn-glycerol). 3 helical membrane passes run 176 to 196 (QIYQLLGEGVLLGIALWFYAG), 201 to 221 (VGQVSGFFLLGYGICRFLAEY), and 231 to 251 (LLGLGLSMGQWLCVPMIFFGI).

This sequence belongs to the Lgt family.

It localises to the cell inner membrane. The catalysed reaction is L-cysteinyl-[prolipoprotein] + a 1,2-diacyl-sn-glycero-3-phospho-(1'-sn-glycerol) = an S-1,2-diacyl-sn-glyceryl-L-cysteinyl-[prolipoprotein] + sn-glycerol 1-phosphate + H(+). It participates in protein modification; lipoprotein biosynthesis (diacylglyceryl transfer). Its function is as follows. Catalyzes the transfer of the diacylglyceryl group from phosphatidylglycerol to the sulfhydryl group of the N-terminal cysteine of a prolipoprotein, the first step in the formation of mature lipoproteins. This is Phosphatidylglycerol--prolipoprotein diacylglyceryl transferase from Polynucleobacter necessarius subsp. necessarius (strain STIR1).